Here is a 193-residue protein sequence, read N- to C-terminus: CASP-like protein 1F3 (193 aa).

The interval 1–25 (MASPQNTSQKRFFQANSPGGMPTAS) is disordered. Topologically, residues 1–35 (MASPQNTSQKRFFQANSPGGMPTASQSQRSRILAQ) are cytoplasmic. A helical membrane pass occupies residues 36–56 (ITLRFLAIAFTVTAIPVMITA). The Extracellular segment spans residues 57-78 (KEPVSLLGLAITPSYKQSSAMK). Residues 79–99 (FLLGVNATVFAFTALSMLFVW) traverse the membrane as a helical segment. At 100-118 (PLRRSGSKPINYFFLHLHD) the chain is on the cytoplasmic side. The chain crosses the membrane as a helical span at residues 119–139 (MVMTLLLISGCAAATAVGYLS). Residues 140–161 (QYGQPETYWSPICDIVKKFCHQ) are Extracellular-facing. Residues 162–182 (MLISTVLSYLAFFCYLALNIL) form a helical membrane-spanning segment. Topologically, residues 183–193 (SVHKLMSRATE) are cytoplasmic.

The protein belongs to the Casparian strip membrane proteins (CASP) family. As to quaternary structure, homodimer and heterodimers.

It localises to the cell membrane. The chain is CASP-like protein 1F3 from Populus trichocarpa (Western balsam poplar).